We begin with the raw amino-acid sequence, 104 residues long: MNPENPPPYPGPGPTAPYPPYPQQPMGPMGPMGAPPPQGYPYPPPQGYPYQGYPQYGWQGGPQEPPKTTVYVVEDQRRDDLGPSTCLTACWTALCCCCLWDMLT.

Pro residues-rich tracts occupy residues 1 to 25 and 33 to 47; these read MNPENPPPYPGPGPTAPYPPYPQQP and GAPPPQGYPYPPPQG. Residues 1-47 are disordered; the sequence is MNPENPPPYPGPGPTAPYPPYPQQPMGPMGPMGAPPPQGYPYPPPQG. A helical transmembrane segment spans residues 81 to 98; sequence LGPSTCLTACWTALCCCC.

Belongs to the CYSTM1 family.

It localises to the membrane. The chain is Cysteine-rich and transmembrane domain-containing protein 1 (Cystm1) from Mus musculus (Mouse).